The primary structure comprises 473 residues: Serine carboxypeptidase-like 25 (473 aa).

The first 22 residues, 1–22 (MAMAKLAIFTTLMAILVMTSQG), serve as a signal peptide directing secretion. Residues N46 and N143 are each glycosylated (N-linked (GlcNAc...) asparagine). 3 cysteine pairs are disulfide-bonded: C92–C358, C252–C263, and C288–C326. S185 is an active-site residue. Residues N289, N299, N347, and N367 are each glycosylated (N-linked (GlcNAc...) asparagine). Residues D395 and H447 contribute to the active site.

This sequence belongs to the peptidase S10 family. Ubiquitous.

It localises to the secreted. In terms of biological role, probable carboxypeptidase. This chain is Serine carboxypeptidase-like 25 (SCPL25), found in Arabidopsis thaliana (Mouse-ear cress).